We begin with the raw amino-acid sequence, 353 residues long: Tsukushi (353 aa).

The N-terminal stretch at 1 to 16 (MPWPLLLLLAVSGAQT) is a signal peptide. The 42-residue stretch at 17–58 (TRPCFPGCQCEVETFGLFDSFSLTRVDCSGLGPHIMPVPIPL) folds into the LRRNT domain. LRR repeat units follow at residues 59-80 (DTAHLDLSSNRLEMVNESVLAG), 85-106 (TLAGLDLSHNLLTSISPTAFSR), 109-130 (YLESLDLSHNGLTALPAESFTS), 132-153 (PLSDVNLSHNQLREVSVSAFTT), 159-179 (ALHVDLSHNLIHRLVPHPTRA), 185-206 (TIQSLNLAWNRLHAVPNLRDLP), 207-227 (LRYLSLDGNPLAVIGPGAFAG), 230-249 (GLTHLSLASLQRLPELAPSG), 255-276 (GLQVLDLSGNPKLNWAGAEVFS), and 280-301 (SLQELDLSGTNLVPLPEALLLH). N74 is a glycosylation site (N-linked (GlcNAc...) asparagine). A glycan (N-linked (GlcNAc...) asparagine) is linked at N137.

Interacts with FZD4 (via FZ domain); competes with WNT2B for binding to FZD4, inhibiting Wnt signaling and repressing peripheral eye development. Interacts with TGFB1; the interaction contributes to regulation of the hair cycle. Interacts with netrin. Interacts with CCN2.

It is found in the secreted. Its function is as follows. Contributes to various developmental events and other processes such as wound healing and cholesterol homeostasis through its interactions with multiple signaling pathways. Wnt signaling inhibitor which competes with WNT2B for binding to Wnt receptor FZD4 and represses WNT2B-dependent development of the peripheral eye. Plays a role in regulating the hair cycle by controlling TGFB1 signaling. Required for the development of the anterior commissure in the brain by inhibiting neurite outgrowth. Essential for terminal differentiation of hippocampal neural stem cells. Plays a role in regulating bone elongation and bone mass by modulating growth plate chondrocyte function and overall body size. Required for development of the inner ear through its involvement in stereocilia formation in inner hair cells. Facilitates wound healing by inhibiting secretion of TGFB1 from macrophages which prevents myofibroblast differentiation, maintaining inflammatory cell quiescence. Plays a role in cholesterol homeostasis by reducing circulating high-density lipoprotein cholesterol, lowering cholesterol efflux capacity and decreasing cholesterol-to-bile acid conversion in the liver. In one study, shown to negatively regulate sympathetic innervation in brown fat, leading to reduced energy expenditure. In another study, shown not to affect brown fat thermogenic capacity, body weight gain or glucose homeostasis. This chain is Tsukushi (TSKU), found in Homo sapiens (Human).